The chain runs to 231 residues: Phosphoglycolate phosphatase, plasmid (231 aa).

D14 serves as the catalytic Nucleophile. 3 residues coordinate Mg(2+): D14, D16, and D175.

This sequence belongs to the HAD-like hydrolase superfamily. CbbY/CbbZ/Gph/YieH family. In terms of assembly, homotrimer. Requires Mg(2+) as cofactor.

It carries out the reaction 2-phosphoglycolate + H2O = glycolate + phosphate. It participates in organic acid metabolism; glycolate biosynthesis; glycolate from 2-phosphoglycolate: step 1/1. Functionally, specifically catalyzes the dephosphorylation of 2-phosphoglycolate. Is involved in the dissimilation of the intracellular 2-phosphoglycolate formed during the DNA repair of 3'-phosphoglycolate ends, a major class of DNA lesions induced by oxidative stress. The sequence is that of Phosphoglycolate phosphatase, plasmid (cbbZP) from Cupriavidus necator (strain ATCC 17699 / DSM 428 / KCTC 22496 / NCIMB 10442 / H16 / Stanier 337) (Ralstonia eutropha).